Consider the following 231-residue polypeptide: Endonuclease NucS (231 aa).

It belongs to the NucS endonuclease family.

It is found in the cytoplasm. Its function is as follows. Cleaves both 3' and 5' ssDNA extremities of branched DNA structures. The polypeptide is Endonuclease NucS (Kocuria rhizophila (strain ATCC 9341 / DSM 348 / NBRC 103217 / DC2201)).